The following is a 333-amino-acid chain: 4-hydroxyproline epimerase (333 aa).

C90 (proton acceptor) is an active-site residue. Substrate contacts are provided by residues 91-92 (GH) and D249. The active-site Proton donor is the C253. Residue 254–255 (GT) participates in substrate binding.

It belongs to the proline racemase family. In terms of assembly, homodimer.

It carries out the reaction trans-4-hydroxy-L-proline = cis-4-hydroxy-D-proline. Allows intracellular utilization of 4-hydroxyproline, one of the major constituents of host collagen, by converting 4-hydroxy-L-proline to 4-hydroxy-D-proline, which can be further metabolized by intracellular 4-hydroxy-D-proline oxidases. Strong B-cell mitogen. Plays an important role in the regulation of intra- and extracellular amino acid pools, allowing the bacterium to profit from host precursors and enzymatic pathways. The sequence is that of 4-hydroxyproline epimerase from Brucella abortus (strain S19).